A 187-amino-acid polypeptide reads, in one-letter code: Peptide deformylase (187 aa).

Residues C107 and H149 each contribute to the Fe cation site. Residue E150 is part of the active site. H153 contacts Fe cation.

This sequence belongs to the polypeptide deformylase family. Fe(2+) is required as a cofactor.

The enzyme catalyses N-terminal N-formyl-L-methionyl-[peptide] + H2O = N-terminal L-methionyl-[peptide] + formate. Removes the formyl group from the N-terminal Met of newly synthesized proteins. Requires at least a dipeptide for an efficient rate of reaction. N-terminal L-methionine is a prerequisite for activity but the enzyme has broad specificity at other positions. The polypeptide is Peptide deformylase (Synechocystis sp. (strain ATCC 27184 / PCC 6803 / Kazusa)).